Here is a 242-residue protein sequence, read N- to C-terminus: Uridylate kinase (242 aa).

11 to 14 (KLSG) contributes to the ATP binding site. Residues 19 to 24 (GDKGVG) are involved in allosteric activation by GTP. Gly53 serves as a coordination point for UMP. Positions 54 and 58 each coordinate ATP. UMP-binding positions include Asp73 and 134–141 (IGSPYFST). ATP is bound by residues Asn162, Tyr168, and Asp171.

It belongs to the UMP kinase family. In terms of assembly, homohexamer.

Its subcellular location is the cytoplasm. It catalyses the reaction UMP + ATP = UDP + ADP. It participates in pyrimidine metabolism; CTP biosynthesis via de novo pathway; UDP from UMP (UMPK route): step 1/1. Allosterically activated by GTP. Inhibited by UTP. Its function is as follows. Catalyzes the reversible phosphorylation of UMP to UDP. This chain is Uridylate kinase, found in Streptococcus agalactiae serotype III (strain NEM316).